The primary structure comprises 186 residues: Peptidyl-tRNA hydrolase (186 aa).

Tyr-14 is a tRNA binding site. His-19 acts as the Proton acceptor in catalysis. 3 residues coordinate tRNA: Tyr-61, Asn-63, and Asn-107.

The protein belongs to the PTH family. Monomer.

The protein resides in the cytoplasm. The enzyme catalyses an N-acyl-L-alpha-aminoacyl-tRNA + H2O = an N-acyl-L-amino acid + a tRNA + H(+). Functionally, hydrolyzes ribosome-free peptidyl-tRNAs (with 1 or more amino acids incorporated), which drop off the ribosome during protein synthesis, or as a result of ribosome stalling. Catalyzes the release of premature peptidyl moieties from peptidyl-tRNA molecules trapped in stalled 50S ribosomal subunits, and thus maintains levels of free tRNAs and 50S ribosomes. This chain is Peptidyl-tRNA hydrolase, found in Helicobacter pylori (strain J99 / ATCC 700824) (Campylobacter pylori J99).